Here is a 473-residue protein sequence, read N- to C-terminus: 3-isopropylmalate dehydratase large subunit (473 aa).

Positions 289 to 319 (TVTWGTTPGQTAGITEPIPDPDDLPEEDRDT) are disordered. Polar residues predominate over residues 291-301 (TWGTTPGQTAG). Residues 307–317 (PDPDDLPEEDR) show a composition bias toward acidic residues. Residues Cys348, Cys408, and Cys411 each contribute to the [4Fe-4S] cluster site.

The protein belongs to the aconitase/IPM isomerase family. LeuC type 1 subfamily. In terms of assembly, heterodimer of LeuC and LeuD. Requires [4Fe-4S] cluster as cofactor.

The enzyme catalyses (2R,3S)-3-isopropylmalate = (2S)-2-isopropylmalate. It functions in the pathway amino-acid biosynthesis; L-leucine biosynthesis; L-leucine from 3-methyl-2-oxobutanoate: step 2/4. Catalyzes the isomerization between 2-isopropylmalate and 3-isopropylmalate, via the formation of 2-isopropylmaleate. The chain is 3-isopropylmalate dehydratase large subunit from Halorubrum lacusprofundi (strain ATCC 49239 / DSM 5036 / JCM 8891 / ACAM 34).